The chain runs to 323 residues: Beta-ketoacyl-[acyl-carrier-protein] synthase III (323 aa).

Residues cysteine 113 and histidine 250 contribute to the active site. Positions 251–255 are ACP-binding; the sequence is QANKR. Asparagine 280 is an active-site residue.

This sequence belongs to the thiolase-like superfamily. FabH family. In terms of assembly, homodimer.

The protein resides in the cytoplasm. The enzyme catalyses malonyl-[ACP] + acetyl-CoA + H(+) = 3-oxobutanoyl-[ACP] + CO2 + CoA. Its pathway is lipid metabolism; fatty acid biosynthesis. Functionally, catalyzes the condensation reaction of fatty acid synthesis by the addition to an acyl acceptor of two carbons from malonyl-ACP. Catalyzes the first condensation reaction which initiates fatty acid synthesis and may therefore play a role in governing the total rate of fatty acid production. Possesses both acetoacetyl-ACP synthase and acetyl transacylase activities. Its substrate specificity determines the biosynthesis of branched-chain and/or straight-chain of fatty acids. The sequence is that of Beta-ketoacyl-[acyl-carrier-protein] synthase III from Brucella canis (strain ATCC 23365 / NCTC 10854 / RM-666).